Here is a 205-residue protein sequence, read N- to C-terminus: Holliday junction branch migration complex subunit RuvA (205 aa).

Residues 1–64 (MIGRLRGTLA…EDAHLLYGFH (64 aa)) form a domain I region. The domain II stretch occupies residues 65–143 (EKRERELFRE…AWETSPAMFT (79 aa)). Residues 144 to 153 (LVSDGPVPVS) form a flexible linker region. Residues 154 to 205 (GASTAEADAVSALVSLGYKPQEASKAVSAIKDKAGLSSEELIRRSLKGMITK) form a domain III region.

The protein belongs to the RuvA family. In terms of assembly, homotetramer. Forms an RuvA(8)-RuvB(12)-Holliday junction (HJ) complex. HJ DNA is sandwiched between 2 RuvA tetramers; dsDNA enters through RuvA and exits via RuvB. An RuvB hexamer assembles on each DNA strand where it exits the tetramer. Each RuvB hexamer is contacted by two RuvA subunits (via domain III) on 2 adjacent RuvB subunits; this complex drives branch migration. In the full resolvosome a probable DNA-RuvA(4)-RuvB(12)-RuvC(2) complex forms which resolves the HJ.

Its subcellular location is the cytoplasm. The RuvA-RuvB-RuvC complex processes Holliday junction (HJ) DNA during genetic recombination and DNA repair, while the RuvA-RuvB complex plays an important role in the rescue of blocked DNA replication forks via replication fork reversal (RFR). RuvA specifically binds to HJ cruciform DNA, conferring on it an open structure. The RuvB hexamer acts as an ATP-dependent pump, pulling dsDNA into and through the RuvAB complex. HJ branch migration allows RuvC to scan DNA until it finds its consensus sequence, where it cleaves and resolves the cruciform DNA. This Pseudomonas putida (strain W619) protein is Holliday junction branch migration complex subunit RuvA.